A 312-amino-acid polypeptide reads, in one-letter code: Mevalonate kinase (312 aa).

104–114 (PISCGLGSSAS) lines the ATP pocket. The active-site Proton acceptor is Asp155.

This sequence belongs to the GHMP kinase family. Mevalonate kinase subfamily. As to quaternary structure, homodimer. It depends on Mg(2+) as a cofactor.

It is found in the cytoplasm. It catalyses the reaction (R)-mevalonate + ATP = (R)-5-phosphomevalonate + ADP + H(+). Its pathway is isoprenoid biosynthesis; isopentenyl diphosphate biosynthesis via mevalonate pathway; isopentenyl diphosphate from (R)-mevalonate: step 1/3. Farnesyl- and geranyl-pyrophosphates are competitive inhibitors. Slightly inhibited by high concentration of ATP. Functionally, catalyzes the phosphorylation of (R)-mevalonate (MVA) to (R)-mevalonate 5-phosphate (MVAP). Functions in the mevalonate (MVA) pathway leading to isopentenyl diphosphate (IPP), a key precursor for the biosynthesis of isoprenoid compounds such as archaeal membrane lipids. The sequence is that of Mevalonate kinase from Methanocaldococcus jannaschii (strain ATCC 43067 / DSM 2661 / JAL-1 / JCM 10045 / NBRC 100440) (Methanococcus jannaschii).